Here is an 801-residue protein sequence, read N- to C-terminus: Phenylalanine--tRNA ligase beta subunit (801 aa).

A tRNA-binding domain is found at 39–148 (AGSFTGVKVG…EDAVIGTDFR (110 aa)). One can recognise a B5 domain in the interval 401–476 (PKPNKVALRR…RIYGYDNIPN (76 aa)). Residues Asp-454, Asp-460, Glu-463, and Glu-464 each contribute to the Mg(2+) site. Positions 707-800 (SKFPSNRRDI…VSEKFGAALR (94 aa)) constitute an FDX-ACB domain.

Belongs to the phenylalanyl-tRNA synthetase beta subunit family. Type 1 subfamily. Tetramer of two alpha and two beta subunits. The cofactor is Mg(2+).

The protein localises to the cytoplasm. It catalyses the reaction tRNA(Phe) + L-phenylalanine + ATP = L-phenylalanyl-tRNA(Phe) + AMP + diphosphate + H(+). This chain is Phenylalanine--tRNA ligase beta subunit, found in Vibrio parahaemolyticus serotype O3:K6 (strain RIMD 2210633).